Reading from the N-terminus, the 805-residue chain is Transcription factor E2f1 (805 aa).

3 disordered regions span residues 9–45, 119–208, and 224–255; these read APIN…TTGH, AAAA…LRHD, and PASH…RNRA. Composition is skewed to low complexity over residues 12 to 37 and 119 to 134; these read NNSN…QQHY and AAAA…QLQQ. Polar residues-rich tracts occupy residues 144–154 and 181–195; these read RKATGKSNDIT and HHQT…SSAP. Positions 147-161 match the PIP-box K+4 motif motif; it reads TGKSNDITNYYKVKR. The span at 240–249 shows a compositional bias: low complexity; the sequence is AASVASSSSS. A DNA-binding region spans residues 253–318; the sequence is NRADTSLGIL…KKSKNNIQWR (66 aa). The segment at 318-411 is dimerization; sequence RCGQSMVSQE…LPNTKLPREI (94 aa). S434 carries the phosphoserine modification. 2 disordered regions span residues 578–650 and 714–743; these read SLTE…QRRS and GAGA…DANS. Composition is skewed to low complexity over residues 595-615 and 623-636; these read AAAA…NSHN and SNHS…NSKS. Over residues 637 to 647 the composition is skewed to polar residues; sequence QPPTIGYGSSQ.

Belongs to the E2F/DP family. As to quaternary structure, heterodimer of E2f and Dp. Cooperates to give sequence-specific DNA binding and optimal trans-activation. Interacts with PCNA. Ubiquitinated by the DCX(DTL) complex, also named CRL4(CDT2) complex, leading to its degradation during S phase. Ubiquitination by the DCX(DTL) complex is essential for cell cycle control and is PCNA-dependent: interacts with PCNA via its PIP-box, while the presence of the containing the 'K+4' motif in the PIP box, recruit the DCX(DTL) complex, leading to its degradation. In terms of tissue distribution, segmentally repeated expression throughout early embryos is restricted to the ventral nerve cord in later embryos.

The protein localises to the nucleus. In terms of biological role, transcriptional activator that binds to E2f sites. Required for wild-type growth in mitotic and polytene tissues, Contributes to the expression of replication genes at the G1-S transition and Cyclin E. Activates cell proliferation in wing imaginal disk, which requires expression of vg. The polypeptide is Transcription factor E2f1 (Drosophila melanogaster (Fruit fly)).